The following is a 509-amino-acid chain: Transmembrane protein 104 homolog (509 aa).

Over 1–19 (MPRLVNGREAAPTYSNLVG) the chain is Cytoplasmic. A helical membrane pass occupies residues 20 to 40 (FIFIFNLIVGTGALTLPGVFA). Over 41 to 45 (RAGWM) the chain is Extracellular. Residues 46 to 66 (LSLIVIVLLAIISYMTVTFII) traverse the membrane as a helical segment. The Cytoplasmic portion of the chain corresponds to 67 to 151 (EAMACANAIR…ATLFFNEFGR (85 aa)). The helical transmembrane segment at 152-172 (VMFYLCLIVYLYGDLSIYSAA) threads the bilayer. The Extracellular portion of the chain corresponds to 173-218 (VARSLRDVVCDQTNGTDTNNLMYWPGDFENNTSLACWKEHTISRLN). N-linked (GlcNAc...) asparagine glycosylation is found at N186, N202, and N203. The helical transmembrane segment at 219-239 (MYRVLLIGFTLIFGPFVYFNV) threads the bilayer. Topologically, residues 240–248 (QKTKYLQML) are cytoplasmic. The chain crosses the membrane as a helical span at residues 249-269 (TAAFRWMAFTLMICISLKLLI). Over 270–277 (SRGAKGHP) the chain is Extracellular. A helical membrane pass occupies residues 278–298 (ATFNVYGIPSLFGACVYSFMC). Topologically, residues 299-320 (HHSLPSLLAPIRHKSMVSKILS) are cytoplasmic. The helical transmembrane segment at 321 to 341 (IDYIIICAFYILLAMTGIFAF) threads the bilayer. The Extracellular segment spans residues 342–361 (ERIEDLYTLDFLPYDVAYVD). A helical membrane pass occupies residues 362-382 (FWSGLLICIDYFLALFPIFTL). Residues 383-411 (STSFPIVAITLKNNLQSLFLDMSQYESYS) are Cytoplasmic-facing. A helical membrane pass occupies residues 412-432 (VILRLCFPLLAIIPPFCITYF). Residues 433-439 (TESLSSL) lie on the Extracellular side of the membrane. A helical transmembrane segment spans residues 440–460 (VAFTGTYAGTGIQYIIPVFLV). Residues 461–487 (YFARRTCSELLGSGVVNRFKSPFKSSA) lie on the Cytoplasmic side of the membrane. The helical transmembrane segment at 488–508 (WLVFVFIWSILCVCLVSINLF) threads the bilayer. Position 509 (S509) is a topological domain, extracellular.

This sequence belongs to the TMEM104 family.

The protein localises to the membrane. In Drosophila melanogaster (Fruit fly), this protein is Transmembrane protein 104 homolog.